Consider the following 100-residue polypeptide: UPF0213 protein FN1575 (100 aa).

The GIY-YIG domain occupies 1-77 (MAYYLYMLRC…KYIKKKKENI (77 aa)).

It belongs to the UPF0213 family.

This chain is UPF0213 protein FN1575, found in Fusobacterium nucleatum subsp. nucleatum (strain ATCC 25586 / DSM 15643 / BCRC 10681 / CIP 101130 / JCM 8532 / KCTC 2640 / LMG 13131 / VPI 4355).